A 277-amino-acid chain; its full sequence is Transcription factor WRKY19 (277 aa).

The WRKY DNA-binding region spans 100 to 168; that stretch reads QDTASLDDGL…YLGDHTCGQA (69 aa).

This sequence belongs to the WRKY group III family.

It is found in the nucleus. In terms of biological role, may play a role in defense responses. This is Transcription factor WRKY19 from Oryza sativa subsp. japonica (Rice).